A 348-amino-acid chain; its full sequence is S-adenosylmethionine:tRNA ribosyltransferase-isomerase (348 aa).

Belongs to the QueA family. Monomer.

The protein resides in the cytoplasm. It carries out the reaction 7-aminomethyl-7-carbaguanosine(34) in tRNA + S-adenosyl-L-methionine = epoxyqueuosine(34) in tRNA + adenine + L-methionine + 2 H(+). It participates in tRNA modification; tRNA-queuosine biosynthesis. In terms of biological role, transfers and isomerizes the ribose moiety from AdoMet to the 7-aminomethyl group of 7-deazaguanine (preQ1-tRNA) to give epoxyqueuosine (oQ-tRNA). The polypeptide is S-adenosylmethionine:tRNA ribosyltransferase-isomerase (Polynucleobacter asymbioticus (strain DSM 18221 / CIP 109841 / QLW-P1DMWA-1) (Polynucleobacter necessarius subsp. asymbioticus)).